The primary structure comprises 63 residues: Transmembrane protein ZNF593OS (63 aa).

A helical transmembrane segment spans residues 30–50; the sequence is LAGVVATVLAVLGLGGSCYAV.

Its subcellular location is the membrane. This Homo sapiens (Human) protein is Transmembrane protein ZNF593OS.